Consider the following 358-residue polypeptide: UDP-N-acetylglucosamine--N-acetylmuramyl-(pentapeptide) pyrophosphoryl-undecaprenol N-acetylglucosamine transferase (358 aa).

UDP-N-acetyl-alpha-D-glucosamine-binding positions include Thr11–Gly13, Asn120, Arg161, Ser188, and Gln282.

The protein belongs to the glycosyltransferase 28 family. MurG subfamily.

Its subcellular location is the cell inner membrane. It catalyses the reaction di-trans,octa-cis-undecaprenyl diphospho-N-acetyl-alpha-D-muramoyl-L-alanyl-D-glutamyl-meso-2,6-diaminopimeloyl-D-alanyl-D-alanine + UDP-N-acetyl-alpha-D-glucosamine = di-trans,octa-cis-undecaprenyl diphospho-[N-acetyl-alpha-D-glucosaminyl-(1-&gt;4)]-N-acetyl-alpha-D-muramoyl-L-alanyl-D-glutamyl-meso-2,6-diaminopimeloyl-D-alanyl-D-alanine + UDP + H(+). The protein operates within cell wall biogenesis; peptidoglycan biosynthesis. Functionally, cell wall formation. Catalyzes the transfer of a GlcNAc subunit on undecaprenyl-pyrophosphoryl-MurNAc-pentapeptide (lipid intermediate I) to form undecaprenyl-pyrophosphoryl-MurNAc-(pentapeptide)GlcNAc (lipid intermediate II). The chain is UDP-N-acetylglucosamine--N-acetylmuramyl-(pentapeptide) pyrophosphoryl-undecaprenol N-acetylglucosamine transferase from Synechococcus sp. (strain CC9902).